The primary structure comprises 275 residues: Hydroxyethylthiazole kinase (275 aa).

A substrate-binding site is contributed by Met50. Residues Arg126 and Ser171 each contribute to the ATP site. Substrate is bound at residue Ala200.

This sequence belongs to the Thz kinase family. The cofactor is Mg(2+).

It carries out the reaction 5-(2-hydroxyethyl)-4-methylthiazole + ATP = 4-methyl-5-(2-phosphooxyethyl)-thiazole + ADP + H(+). It functions in the pathway cofactor biosynthesis; thiamine diphosphate biosynthesis; 4-methyl-5-(2-phosphoethyl)-thiazole from 5-(2-hydroxyethyl)-4-methylthiazole: step 1/1. Catalyzes the phosphorylation of the hydroxyl group of 4-methyl-5-beta-hydroxyethylthiazole (THZ). This chain is Hydroxyethylthiazole kinase, found in Acinetobacter baumannii (strain ACICU).